We begin with the raw amino-acid sequence, 554 residues long: Glucose-6-phosphate isomerase (554 aa).

The active-site Proton donor is the glutamate 359. Residues histidine 390 and lysine 518 contribute to the active site.

This sequence belongs to the GPI family.

The protein localises to the cytoplasm. The enzyme catalyses alpha-D-glucose 6-phosphate = beta-D-fructose 6-phosphate. It functions in the pathway carbohydrate biosynthesis; gluconeogenesis. It participates in carbohydrate degradation; glycolysis; D-glyceraldehyde 3-phosphate and glycerone phosphate from D-glucose: step 2/4. Functionally, catalyzes the reversible isomerization of glucose-6-phosphate to fructose-6-phosphate. This Pseudomonas savastanoi pv. phaseolicola (strain 1448A / Race 6) (Pseudomonas syringae pv. phaseolicola (strain 1448A / Race 6)) protein is Glucose-6-phosphate isomerase.